The primary structure comprises 357 residues: Probable leucine aminopeptidase MCYG_04170 (357 aa).

A signal peptide spans 1-15; it reads MKVLAALALSALALA. N-linked (GlcNAc...) asparagine glycosylation is present at Asn76. Residues His167 and Asp185 each contribute to the Zn(2+) site. An N-linked (GlcNAc...) asparagine glycan is attached at Asn186. Residues Glu224 and Asp251 each contribute to the Zn(2+) site. Residues Cys291 and Cys295 are joined by a disulfide bond. A Zn(2+)-binding site is contributed by His324.

It belongs to the peptidase M28 family. M28E subfamily. As to quaternary structure, monomer. Zn(2+) serves as cofactor.

It localises to the secreted. In terms of biological role, probable extracellular aminopeptidase which contributes to pathogenicity. The chain is Probable leucine aminopeptidase MCYG_04170 from Arthroderma otae (strain ATCC MYA-4605 / CBS 113480) (Microsporum canis).